The following is a 195-amino-acid chain: ATP-dependent Clp protease proteolytic subunit (195 aa).

Ser-99 serves as the catalytic Nucleophile. His-124 is a catalytic residue.

This sequence belongs to the peptidase S14 family. In terms of assembly, fourteen ClpP subunits assemble into 2 heptameric rings which stack back to back to give a disk-like structure with a central cavity, resembling the structure of eukaryotic proteasomes.

Its subcellular location is the cytoplasm. It carries out the reaction Hydrolysis of proteins to small peptides in the presence of ATP and magnesium. alpha-casein is the usual test substrate. In the absence of ATP, only oligopeptides shorter than five residues are hydrolyzed (such as succinyl-Leu-Tyr-|-NHMec, and Leu-Tyr-Leu-|-Tyr-Trp, in which cleavage of the -Tyr-|-Leu- and -Tyr-|-Trp bonds also occurs).. Functionally, cleaves peptides in various proteins in a process that requires ATP hydrolysis. Has a chymotrypsin-like activity. Plays a major role in the degradation of misfolded proteins. This Desulforamulus reducens (strain ATCC BAA-1160 / DSM 100696 / MI-1) (Desulfotomaculum reducens) protein is ATP-dependent Clp protease proteolytic subunit.